The chain runs to 416 residues: Multifunctional CCA protein (416 aa).

Residues glycine 8 and arginine 11 each coordinate ATP. Residues glycine 8 and arginine 11 each coordinate CTP. The Mg(2+) site is built by aspartate 21 and aspartate 23. Arginine 91, arginine 137, and arginine 140 together coordinate ATP. The CTP site is built by arginine 91, arginine 137, and arginine 140. The 102-residue stretch at 228-329 (TGVHTLMVLA…VKIFDKADFW (102 aa)) folds into the HD domain.

It belongs to the tRNA nucleotidyltransferase/poly(A) polymerase family. Bacterial CCA-adding enzyme type 1 subfamily. As to quaternary structure, monomer. Can also form homodimers and oligomers. The cofactor is Mg(2+). Ni(2+) is required as a cofactor.

It carries out the reaction a tRNA precursor + 2 CTP + ATP = a tRNA with a 3' CCA end + 3 diphosphate. It catalyses the reaction a tRNA with a 3' CCA end + 2 CTP + ATP = a tRNA with a 3' CCACCA end + 3 diphosphate. Its function is as follows. Catalyzes the addition and repair of the essential 3'-terminal CCA sequence in tRNAs without using a nucleic acid template. Adds these three nucleotides in the order of C, C, and A to the tRNA nucleotide-73, using CTP and ATP as substrates and producing inorganic pyrophosphate. tRNA 3'-terminal CCA addition is required both for tRNA processing and repair. Also involved in tRNA surveillance by mediating tandem CCA addition to generate a CCACCA at the 3' terminus of unstable tRNAs. While stable tRNAs receive only 3'-terminal CCA, unstable tRNAs are marked with CCACCA and rapidly degraded. This is Multifunctional CCA protein from Shewanella baltica (strain OS155 / ATCC BAA-1091).